The following is a 215-amino-acid chain: L-fuculose phosphate aldolase (215 aa).

Substrate is bound by residues 28 to 29 (GN), 43 to 44 (TG), and 71 to 72 (SS). The active-site Proton donor/acceptor is the E73. 4 residues coordinate Zn(2+): E73, H92, H94, and H155.

The protein belongs to the aldolase class II family. AraD/FucA subfamily. In terms of assembly, homotetramer. Requires Zn(2+) as cofactor.

The enzyme catalyses L-fuculose 1-phosphate = (S)-lactaldehyde + dihydroxyacetone phosphate. It participates in carbohydrate degradation; L-fucose degradation; L-lactaldehyde and glycerone phosphate from L-fucose: step 3/3. Its activity is regulated as follows. Inhibited by phosphoglycolohydroxamate (PGH). In terms of biological role, involved in the degradation of L-fucose and D-arabinose. Catalyzes the reversible cleavage of L-fuculose 1-phosphate (Fuc1P) to yield dihydroxyacetone phosphate (DHAP) and L-lactaldehyde. Also able to catalyze the reversible cleavage of D-ribulose 1-phosphate, but FucA has a higher affinity for L-fuculose 1-phosphate and L-lactaldehyde than for D-ribulose 1-phosphate and glycolaldehyde, respectively. FucA possesses a high specificity for the dihydroxyacetone phosphate (DHAP), but accepts a great variety of different aldehydes and has a strong preference for L-configurated alpha-hydroxy aldehydes. FucA generates a vicinal diol unit having the absolute (3R,4R)-cis configuration (D-erythro). In Escherichia coli (strain K12), this protein is L-fuculose phosphate aldolase.